We begin with the raw amino-acid sequence, 546 residues long: Chaperonin GroEL (546 aa).

Residues 29–32 (TMGP), K50, 86–90 (DGTTT), G414, and D492 each bind ATP.

The protein belongs to the chaperonin (HSP60) family. As to quaternary structure, forms a cylinder of 14 subunits composed of two heptameric rings stacked back-to-back. Interacts with the co-chaperonin GroES.

The protein resides in the cytoplasm. It catalyses the reaction ATP + H2O + a folded polypeptide = ADP + phosphate + an unfolded polypeptide.. Functionally, together with its co-chaperonin GroES, plays an essential role in assisting protein folding. The GroEL-GroES system forms a nano-cage that allows encapsulation of the non-native substrate proteins and provides a physical environment optimized to promote and accelerate protein folding. The sequence is that of Chaperonin GroEL from Helicobacter acinonychis (strain Sheeba).